Reading from the N-terminus, the 627-residue chain is Pentatricopeptide repeat-containing protein At2g15630, mitochondrial (627 aa).

A mitochondrion-targeting transit peptide spans 1 to 29; it reads MRRFTVPCILRHRISILSGAGYSPAAARL. PPR repeat units follow at residues 154-188, 189-223, 224-258, 259-293, 294-324, 326-360, 361-395, 396-430, 431-465, 466-500, 501-535, 536-570, and 571-605; these read STIL…GFYP, KTET…EIKS, NVYT…GIKP, TIVT…GFQP, DMQT…IGLV, DSVS…GMVP, TFYT…GIVL, DSVT…GIQP, TQFT…GMKP, DLVM…SINP, DDVT…GIKP, DHIS…GFNP, and TLLT…GIVP.

Belongs to the PPR family. P subfamily.

The protein localises to the mitochondrion. The sequence is that of Pentatricopeptide repeat-containing protein At2g15630, mitochondrial from Arabidopsis thaliana (Mouse-ear cress).